A 117-amino-acid polypeptide reads, in one-letter code: uncharacterized protein (117 aa).

This sequence belongs to the transposase 34 family.

This is an uncharacterized protein from Sinorhizobium fredii (strain NBRC 101917 / NGR234).